The following is a 250-amino-acid chain: Carboxy-S-adenosyl-L-methionine synthase (250 aa).

S-adenosyl-L-methionine-binding positions include tyrosine 45, 70–72 (GCS), 95–96 (DN), 123–124 (DI), asparagine 138, and arginine 205.

This sequence belongs to the class I-like SAM-binding methyltransferase superfamily. Cx-SAM synthase family. In terms of assembly, homodimer.

It carries out the reaction prephenate + S-adenosyl-L-methionine = carboxy-S-adenosyl-L-methionine + 3-phenylpyruvate + H2O. In terms of biological role, catalyzes the conversion of S-adenosyl-L-methionine (SAM) to carboxy-S-adenosyl-L-methionine (Cx-SAM). This chain is Carboxy-S-adenosyl-L-methionine synthase, found in Marinobacter nauticus (strain ATCC 700491 / DSM 11845 / VT8) (Marinobacter aquaeolei).